Here is a 104-residue protein sequence, read N- to C-terminus: UPF0147 protein MK1586 (104 aa).

This sequence belongs to the UPF0147 family.

The sequence is that of UPF0147 protein MK1586 from Methanopyrus kandleri (strain AV19 / DSM 6324 / JCM 9639 / NBRC 100938).